Here is a 3329-residue protein sequence, read N- to C-terminus: Breast cancer type 2 susceptibility protein homolog (3329 aa).

An interaction with PALB2 region spans residues 1–40 (MPVEYKRRPTFWEIFKARCSTADLGPISLNWFEELSSEAP). Disordered regions lie at residues 37–69 (SEAP…QRNP) and 207–241 (EARS…SVPS). Phosphoserine is present on residues Ser-435 and Ser-481. Residues 628 to 650 (PDSSDKKRCLPNDPEEPSLTNSF) are disordered. Residues 628-979 (PDSSDKKRCL…DKWSEFLDPV (352 aa)) form an interaction with NPM1 region. Ser-735 is subject to Phosphoserine. A compositionally biased stretch (basic and acidic residues) spans 934-953 (EKSRNNIEQHQKGTEDKDFK). The interval 934-965 (EKSRNNIEQHQKGTEDKDFKSNSSLNMKSDGN) is disordered. The span at 954 to 965 (SNSSLNMKSDGN) shows a compositional bias: polar residues. BRCA2 repeat units lie at residues 981-1015 (NHNF…DIEE) and 1192-1226 (NEME…DIEN). Residues 982–2035 (HNFGGSFRTA…LHKVKGMLEE (1054 aa)) are interaction with RAD51. The segment at 1296-1340 (NTKHEDSYTSSQRNNLENSDGSMSSTSGPVYIHKGDSDLPADQGS) is disordered. Residues 1303–1323 (YTSSQRNNLENSDGSMSSTSG) show a composition bias toward polar residues. BRCA2 repeat units lie at residues 1394 to 1428 (IKEF…RETD), 1491 to 1525 (KEPT…ETQY), 1623 to 1657 (TEDS…EQGD), 1924 to 1958 (PSRT…EMDG), and 2004 to 2038 (NSSV…EFDL). A Phosphoserine modification is found at Ser-2048. The segment at 2073–2099 (NSKLQKTYNDKSSLPSNYKESGSSGNT) is disordered. Residues 2074 to 2099 (SKLQKTYNDKSSLPSNYKESGSSGNT) are compositionally biased toward polar residues. The tract at residues 2219-2285 (KRGGVTVDAV…EPVTCGPFCS (67 aa)) is interaction with HSF2BP. An interaction with FANCD2 region spans residues 2298–2466 (TSPAQELLSK…SPKQLYIYGV (169 aa)). The disordered stretch occupies residues 2361-2393 (FHGDEHFNSKNVNLEGKNQKSTDGDREDGNDSH). A compositionally biased stretch (basic and acidic residues) spans 2377–2393 (KNQKSTDGDREDGNDSH). The interaction with SEM1 stretch occupies residues 2402-2753 (MSSLQSARDL…QRVYPLQWVE (352 aa)). The Nuclear export signal; masked by interaction with SEM1 motif lies at 2603 to 2619 (AAKTLVLCISDIISPST). Residue Ser-3214 is modified to Phosphoserine; by CDK1 and CDK2. Disordered stretches follow at residues 3221-3257 (FQPP…VSLP) and 3273-3329 (QALT…AVES). Ser-3241 carries the phosphoserine modification. Residues 3309–3329 (SRKESLRDCRGDSSEKLAVES) are compositionally biased toward basic and acidic residues.

In terms of assembly, monomer and dimer. Interacts with RAD51; regulates RAD51 recruitment and function at sites of DNA repair. Interacts with SEM1, WDR16, USP11, DMC1, ROCK2 and NPM1. Interacts with both nonubiquitinated and monoubiquitinated FANCD2; this complex also includes XRCC3 and phosphorylated FANCG. Part of a BRCA complex containing BRCA1, BRCA2 and PALB2. Component of the homologous recombination repair (HR) complex composed of ERCC5/XPG, BRCA2, PALB2, DSS1 and RAD51. Within the complex, interacts with ERCC5/XPG and PALB2. Interacts directly with PALB2 which may serve as a scaffold for a HR complex containing PALB2, BRCA2, RAD51C, RAD51 and XRCC3. Interacts with BRCA1 only in the presence of PALB2 which serves as the bridging protein. Interacts with POLH; the interaction is direct. Interacts with the TREX-2 complex subunits PCID2 and SEM1. Interacts with HSF2BP and BRME1; the interaction with HSF2BP is direct and allows the formation of a ternary complex. The complex BRME1:HSF2BP:BRCA2 interacts with SPATA22, MEIOB and RAD51. In terms of processing, phosphorylated by ATM upon irradiation-induced DNA damage. Phosphorylation by CHEK1 and CHEK2 regulates interaction with RAD51. Phosphorylation at Ser-3291 by CDK1 and CDK2 is low in S phase when recombination is active, but increases as cells progress towards mitosis; this phosphorylation prevents homologous recombination-dependent repair during S phase and G2 by inhibiting RAD51 binding. Ubiquitinated in the absence of DNA damage; this does not lead to proteasomal degradation. In contrast, ubiquitination in response to DNA damage leads to proteasomal degradation. As to expression, widely expressed. Highest expression in cerebellum, testis, ileum, appendix, epididymis, ovary and mammary gland. No expression in lung.

It is found in the nucleus. The protein localises to the cytoplasm. Its subcellular location is the cytoskeleton. The protein resides in the microtubule organizing center. It localises to the centrosome. Involved in double-strand break repair and/or homologous recombination. Binds RAD51 and potentiates recombinational DNA repair by promoting assembly of RAD51 onto single-stranded DNA (ssDNA). Acts by targeting RAD51 to ssDNA over double-stranded DNA, enabling RAD51 to displace replication protein-A (RPA) from ssDNA and stabilizing RAD51-ssDNA filaments by blocking ATP hydrolysis. Part of a PALB2-scaffolded HR complex containing RAD51C and which is thought to play a role in DNA repair by HR. May participate in S phase checkpoint activation. Binds selectively to ssDNA, and to ssDNA in tailed duplexes and replication fork structures. May play a role in the extension step after strand invasion at replication-dependent DNA double-strand breaks; together with PALB2 is involved in both POLH localization at collapsed replication forks and DNA polymerization activity. In concert with NPM1, regulates centrosome duplication. Interacts with the TREX-2 complex (transcription and export complex 2) subunits PCID2 and SEM1, and is required to prevent R-loop-associated DNA damage and thus transcription-associated genomic instability, independently of its known role in homologous recombination. This Mus musculus (Mouse) protein is Breast cancer type 2 susceptibility protein homolog.